Consider the following 223-residue polypeptide: Small ribosomal subunit protein uS3 (223 aa).

The KH type-2 domain maps to 39–107 (VRSYLAKKLS…PVHINIQEIR (69 aa)).

Belongs to the universal ribosomal protein uS3 family. Part of the 30S ribosomal subunit. Forms a tight complex with proteins S10 and S14.

In terms of biological role, binds the lower part of the 30S subunit head. Binds mRNA in the 70S ribosome, positioning it for translation. The protein is Small ribosomal subunit protein uS3 of Nitrosococcus oceani (strain ATCC 19707 / BCRC 17464 / JCM 30415 / NCIMB 11848 / C-107).